The sequence spans 119 residues: Large ribosomal subunit protein eL8 (119 aa).

This sequence belongs to the eukaryotic ribosomal protein eL8 family. Part of the 50S ribosomal subunit. Probably part of the RNase P complex.

It is found in the cytoplasm. In terms of biological role, multifunctional RNA-binding protein that recognizes the K-turn motif in ribosomal RNA, the RNA component of RNase P, box H/ACA, box C/D and box C'/D' sRNAs. This chain is Large ribosomal subunit protein eL8, found in Archaeoglobus fulgidus (strain ATCC 49558 / DSM 4304 / JCM 9628 / NBRC 100126 / VC-16).